The following is a 215-amino-acid chain: 3-isopropylmalate dehydratase small subunit (215 aa).

Belongs to the LeuD family. LeuD type 1 subfamily. As to quaternary structure, heterodimer of LeuC and LeuD.

It catalyses the reaction (2R,3S)-3-isopropylmalate = (2S)-2-isopropylmalate. Its pathway is amino-acid biosynthesis; L-leucine biosynthesis; L-leucine from 3-methyl-2-oxobutanoate: step 2/4. Catalyzes the isomerization between 2-isopropylmalate and 3-isopropylmalate, via the formation of 2-isopropylmaleate. The polypeptide is 3-isopropylmalate dehydratase small subunit (Xanthomonas campestris pv. campestris (strain 8004)).